A 990-amino-acid polypeptide reads, in one-letter code: Translation initiation factor IF-2 (990 aa).

The interval 92–402 is disordered; the sequence is KKRTFVKRDD…QRDEHLQAAP (311 aa). Composition is skewed to low complexity over residues 104–116 and 131–151; these read EGAA…AAFA and EAPA…AAPA. The span at 158–201 shows a compositional bias: basic and acidic residues; the sequence is ELARREEQARHQAELIRRQEAELAAKRAAREAREKREREAEERA. Residues 223–243 are compositionally biased toward low complexity; sequence TREQAAEATARNAAQLQARAK. A compositionally biased stretch (basic and acidic residues) spans 244 to 264; that stretch reads AAAESKARSDEEAARAADLDA. 2 stretches are compositionally biased toward low complexity: residues 281–290 and 318–342; these read ATPKKAVMVA and PAVG…PGAG. Basic and acidic residues-rich tracts occupy residues 358–368 and 386–398; these read PAKKKEIKTRG and RRGD…DEHL. A tr-type G domain is found at 490–659; it reads PRAPVVTVMG…LLQADVMELK (170 aa). Residues 499-506 are G1; sequence GHVDHGKT. Position 499-506 (499-506) interacts with GTP; it reads GHVDHGKT. The tract at residues 524 to 528 is G2; the sequence is GITQH. A G3 region spans residues 545–548; that stretch reads DTPG. GTP-binding positions include 545–549 and 599–602; these read DTPGH and TKAD. The tract at residues 599–602 is G4; the sequence is TKAD. The G5 stretch occupies residues 635–637; the sequence is SSK.

The protein belongs to the TRAFAC class translation factor GTPase superfamily. Classic translation factor GTPase family. IF-2 subfamily.

It is found in the cytoplasm. In terms of biological role, one of the essential components for the initiation of protein synthesis. Protects formylmethionyl-tRNA from spontaneous hydrolysis and promotes its binding to the 30S ribosomal subunits. Also involved in the hydrolysis of GTP during the formation of the 70S ribosomal complex. This chain is Translation initiation factor IF-2, found in Verminephrobacter eiseniae (strain EF01-2).